A 617-amino-acid chain; its full sequence is Melatonin-related receptor (617 aa).

Residues 1–30 are Extracellular-facing; that stretch reads MGPTLAVPTPYGCIGCKLPQPEYPPALIIF. Residues 31 to 51 form a helical membrane-spanning segment; the sequence is MFCAMVITIVVDLIGNSMVIL. Topologically, residues 52–64 are cytoplasmic; that stretch reads AVTKNKKLRNSGN. Residues 65 to 85 traverse the membrane as a helical segment; that stretch reads IFVVSLSVADMLVAIYPYPLM. Residues 86–103 lie on the Extracellular side of the membrane; that stretch reads LHAMSIGGWDLSQLQCQM. The cysteines at positions 101 and 178 are disulfide-linked. The chain crosses the membrane as a helical span at residues 104-124; the sequence is VGFITGLSVVGSIFNIVAIAI. Topologically, residues 125-143 are cytoplasmic; sequence NRYCYICHSLQYERIFSVR. Residues 144–164 traverse the membrane as a helical segment; sequence NTCIYLVITWIMTVLAVLPNM. Residues 165 to 188 lie on the Extracellular side of the membrane; that stretch reads YIGTIEYDPRTYTCIFNYLNNPVF. Residues 189–209 form a helical membrane-spanning segment; it reads TVTIVCIHFVLPLLIVGFCYV. Residues 210–239 lie on the Cytoplasmic side of the membrane; that stretch reads RIWTKVLAARDPAGQNPDNQLAEVRNFLTM. The helical transmembrane segment at 240 to 260 threads the bilayer; sequence FVIFLLFAVCWCPINVLTVLV. At 261-273 the chain is on the extracellular side; sequence AVSPKEMAGKIPN. Residues 274–294 form a helical membrane-spanning segment; sequence WLYLAAYFIAYFNSCLNAVIY. Topologically, residues 295 to 617 are cytoplasmic; sequence GLLNENFRRE…VEDDPDEMAV (323 aa). Disordered stretches follow at residues 340–438 and 464–596; these read AHAR…ATVY and SVHF…VTTS. Over residues 341–353 the composition is skewed to basic and acidic residues; that stretch reads HARDQAREQDRAH. The span at 485–500 shows a compositional bias: polar residues; it reads GSHSKSAFSAATSHPK.

It belongs to the G-protein coupled receptor 1 family. As to quaternary structure, homodimer, and heterodimer with MTNR1A and MTNR1B. Interacts with KAT5. Interacts with RTN4 isoform A/NOGO-A. Interacts with TGFBR1. Interacts with GTF2I. In terms of processing, cleaved by CAPN1 in a calcium-dependent manner. In terms of tissue distribution, hypothalamus and pituitary.

Its subcellular location is the cell membrane. The protein resides in the postsynaptic density. The protein localises to the nucleus. In terms of biological role, g protein-coupled receptor that plays a role in numerous physiological processes including regulation of energy metabolism, neurite outgrowth or cell migration. Promotes self-renewal and neuronal differentiation of neural progenitor cells through activation of the NOTCH and WNT/beta-catenin signaling pathways. Modulates the KAT5-dependent glucocorticoid receptor signaling by modulating KAT5 subcellular compartmentalisation. Also plays a role in the activation TGFBR1 in the absence of TGFBR2 by interfering with FKBP1A binding to TGFBR1, leading to induction of both canonical and non-canonical SMAD signaling pathways resulting in inhibition of proliferation or promotion of migration. Functionally, upon cleavage by CAPN1, functions as a scaffold in the nucleus for interacting partners such as GTF2I to promote FOS promoter activation. The chain is Melatonin-related receptor (GPR50) from Homo sapiens (Human).